The primary structure comprises 183 residues: dCTP deaminase (183 aa).

106-111 (KSTYAR) is a binding site for dCTP. The active-site Proton donor/acceptor is the E132. The dCTP site is built by Q151, Y165, and Q175.

Belongs to the dCTP deaminase family. In terms of assembly, homotrimer.

The enzyme catalyses dCTP + H2O + H(+) = dUTP + NH4(+). It participates in pyrimidine metabolism; dUMP biosynthesis; dUMP from dCTP (dUTP route): step 1/2. Catalyzes the deamination of dCTP to dUTP. The chain is dCTP deaminase from Gluconobacter oxydans (strain 621H) (Gluconobacter suboxydans).